A 262-amino-acid polypeptide reads, in one-letter code: 4-hydroxy-2-oxo-heptane-1,7-dioate aldolase (262 aa).

The active-site Proton acceptor is His45. Gln147 is a substrate binding site. A divalent metal cation is bound at residue Glu149. Substrate contacts are provided by Ala174 and Asp175. Asp175 provides a ligand contact to a divalent metal cation.

Belongs to the HpcH/HpaI aldolase family. As to quaternary structure, homohexamer; trimer of dimers. The cofactor is a divalent metal cation.

It catalyses the reaction 4-hydroxy-2-oxoheptanedioate = succinate semialdehyde + pyruvate. It functions in the pathway aromatic compound metabolism; 4-hydroxyphenylacetate degradation; pyruvate and succinate semialdehyde from 4-hydroxyphenylacetate: step 7/7. In terms of biological role, catalyzes the reversible retro-aldol cleavage of 4-hydroxy-2-ketoheptane-1,7-dioate (HKHD) to pyruvate and succinic semialdehyde. This chain is 4-hydroxy-2-oxo-heptane-1,7-dioate aldolase, found in Shigella sonnei (strain Ss046).